Reading from the N-terminus, the 391-residue chain is 8-amino-7-oxononanoate synthase (391 aa).

Arginine 24 serves as a coordination point for substrate. Position 112-113 (glycine 112–tyrosine 113) interacts with pyridoxal 5'-phosphate. Histidine 137 serves as a coordination point for substrate. Residues serine 183, histidine 211, and threonine 240 each contribute to the pyridoxal 5'-phosphate site. At lysine 243 the chain carries N6-(pyridoxal phosphate)lysine. Threonine 357 contacts substrate.

This sequence belongs to the class-II pyridoxal-phosphate-dependent aminotransferase family. BioF subfamily. In terms of assembly, homodimer. It depends on pyridoxal 5'-phosphate as a cofactor.

The catalysed reaction is 6-carboxyhexanoyl-[ACP] + L-alanine + H(+) = (8S)-8-amino-7-oxononanoate + holo-[ACP] + CO2. Its pathway is cofactor biosynthesis; biotin biosynthesis. Functionally, catalyzes the decarboxylative condensation of pimeloyl-[acyl-carrier protein] and L-alanine to produce 8-amino-7-oxononanoate (AON), [acyl-carrier protein], and carbon dioxide. The protein is 8-amino-7-oxononanoate synthase of Alkalilimnicola ehrlichii (strain ATCC BAA-1101 / DSM 17681 / MLHE-1).